Consider the following 237-residue polypeptide: Phosphoserine phosphatase (237 aa).

The Nucleophile role is filled by D30. Mg(2+) is bound by residues D30 and D32. The active-site Proton donor is D32. Substrate-binding positions include E39, R76, 120–121 (SG), and K169. A Mg(2+)-binding site is contributed by D192. N195 is a substrate binding site.

This sequence belongs to the HAD-like hydrolase superfamily. SerB family. The cofactor is Mg(2+).

The enzyme catalyses O-phospho-L-serine + H2O = L-serine + phosphate. The catalysed reaction is O-phospho-D-serine + H2O = D-serine + phosphate. Its pathway is amino-acid biosynthesis; L-serine biosynthesis; L-serine from 3-phospho-D-glycerate: step 3/3. Its function is as follows. Catalyzes the dephosphorylation of phosphoserine (P-Ser) in vitro. Also catalyzes the dephosphorylation of phosphothreonine (P-Thr) in vitro. This Albidiferax ferrireducens (strain ATCC BAA-621 / DSM 15236 / T118) (Rhodoferax ferrireducens) protein is Phosphoserine phosphatase.